We begin with the raw amino-acid sequence, 4981 residues long: Protocadherin Fat 4 (4981 aa).

A signal peptide spans 1 to 42; sequence MNLAANRAPGRRRLPLPSPSLCQLLRVWGLLSLLPGSARVQA. Topologically, residues 43-4505 are extracellular; that stretch reads AEQRQVFQVM…PDEISLPLWA (4463 aa). Cadherin domains lie at 44–135, 136–250, 251–353, 359–475, 476–582, 584–689, 690–793, 794–893, 894–996, 997–1100, 1101–1210, 1211–1315, 1316–1420, 1421–1529, 1529–1629, 1630–1740, 1741–1841, 1842–1944, 1945–2051, 2051–2154, 2155–2259, 2260–2364, 2365–2468, 2469–2569, 2570–2671, 2672–2775, 2775–2874, 2875–2985, 2986–3091, 3092–3196, 3197–3300, 3301–3406, 3407–3512, and 3511–3622; these read EQRQ…APVF, PDPS…PPVF, GSSH…DPVV, PATS…PPVF, EQQV…KPVF, QPEG…SPVF, YPVQ…PPVF, SQAA…APHF, LQAV…PPVF, DQIS…RPLF, NSTN…APKF, LKDF…TPSF, PKST…PPSF, PPGD…VPMF, FISQ…GPVF, TQTK…PPVF, PTDT…TPRF, SRPV…PPVF, SMSS…PPMF, FLSP…NPVF, AQAM…VPVF, ELSP…VPTF, ANNM…PPRF, QHHP…FPKV, RAKE…APTF, EEDP…APRF, FSQI…TPRF, SRPS…PPQF, LQNK…TPEF, SQNH…SPVF, VPDE…VPRF, VSKL…PPVF, SLST…GPVL, and VLTV…VEIF. 2 N-linked (GlcNAc...) asparagine glycosylation sites follow: asparagine 84 and asparagine 237. 18 N-linked (GlcNAc...) asparagine glycosylation sites follow: asparagine 393, asparagine 416, asparagine 435, asparagine 483, asparagine 551, asparagine 615, asparagine 676, asparagine 721, asparagine 825, asparagine 880, asparagine 948, asparagine 1085, asparagine 1101, asparagine 1104, asparagine 1225, asparagine 1296, asparagine 1389, and asparagine 1514. 4 N-linked (GlcNAc...) asparagine glycosylation sites follow: asparagine 1828, asparagine 1899, asparagine 1967, and asparagine 2119. Asparagine 2387 and asparagine 2432 each carry an N-linked (GlcNAc...) asparagine glycan. Residues asparagine 2923, asparagine 2939, asparagine 3038, asparagine 3142, asparagine 3219, asparagine 3394, and asparagine 3479 are each glycosylated (N-linked (GlcNAc...) asparagine). N-linked (GlcNAc...) asparagine glycosylation is found at asparagine 3708 and asparagine 3760. The region spanning 3804–3862 is the EGF-like 1 domain; the sequence is DHDPCIHGPCQNGGSCLRRLAVGSALKIQESLPVIIVANEPLQPSQCKCVPGYAGSWCE. 12 disulfides stabilise this stretch: cysteine 3808–cysteine 3819, cysteine 3813–cysteine 3850, cysteine 3852–cysteine 3861, cysteine 3868–cysteine 3879, cysteine 3873–cysteine 3888, cysteine 3890–cysteine 3899, cysteine 3906–cysteine 3917, cysteine 3911–cysteine 3926, cysteine 3928–cysteine 3937, cysteine 3944–cysteine 3955, cysteine 3949–cysteine 3964, and cysteine 3966–cysteine 3975. An EGF-like 2; calcium-binding domain is found at 3864 to 3900; sequence DIDECLPAPCHNGGTCHNLVGGFSCSCPEGFTGRACE. The EGF-like 3; calcium-binding domain occupies 3902-3938; the sequence is DINECLPSPCKHGAVCQNFPGGFNCVCKTGYTGKMCE. Residues 3940 to 3976 form the EGF-like 4 domain; sequence SVNYCECNPCFNGGSCQSGVESYYCHCPFGVFGKHCE. One can recognise a Laminin G-like 1 domain in the interval 3977–4161; it reads LNSYGFEELS…LAAQGILDQC (185 aa). Asparagine 4019 is a glycosylation site (N-linked (GlcNAc...) asparagine). Cystine bridges form between cysteine 4135-cysteine 4161, cysteine 4168-cysteine 4179, cysteine 4173-cysteine 4188, and cysteine 4190-cysteine 4199. In terms of domain architecture, EGF-like 5 spans 4164–4200; it reads LEGTCARNPCQHGGTCVDFWSWQQCQCMEGLTGKYCE. One can recognise a Laminin G-like 2 domain in the interval 4219 to 4399; that stretch reads YHMSQSEKRE…KTDPSVKIGC (181 aa). Residues asparagine 4269 and asparagine 4314 are each glycosylated (N-linked (GlcNAc...) asparagine). 4 cysteine pairs are disulfide-bonded: cysteine 4366-cysteine 4399, cysteine 4431-cysteine 4442, cysteine 4436-cysteine 4452, and cysteine 4454-cysteine 4463. One can recognise an EGF-like 6 domain in the interval 4427–4464; the sequence is PPGDCASHPCQNGGSCEPGLLSGYTCSCPESHTGRTCE. Residues 4506-4526 traverse the membrane as a helical segment; the sequence is VPAIVGSCATALALLVLSLIL. Over 4527 to 4981 the chain is Cytoplasmic; it reads CNQCRGKMPK…AKDGEAEQYV (455 aa). 5 disordered regions span residues 4535-4585, 4677-4713, 4753-4773, 4796-4911, and 4957-4981; these read PKNP…PDII, PSSYGQGLRTSSLSHSACPTPNPLSRHSPAPFSKPSA, RRSKSPQAMASHGSRPGSRLK, RLNT…PAAA, and AAGNEEGKSGAAKPAAKDGEAEQYV. Polar residues predominate over residues 4677-4701; that stretch reads PSSYGQGLRTSSLSHSACPTPNPLS. The necessary and sufficient for interaction with MPDZ stretch occupies residues 4708–4797; that stretch reads FSKPSAFYRN…GLSIEEVERL (90 aa). Over residues 4811 to 4823 the composition is skewed to basic and acidic residues; that stretch reads DHGRSSSEEDCRR. Serine 4878 is modified (phosphoserine). The segment covering 4971 to 4981 has biased composition (basic and acidic residues); it reads AAKDGEAEQYV.

As to quaternary structure, heterophilic interaction with DCHS1; this interaction affects their respective protein levels. Interacts (via cytoplasmic domain) with MPDZ. Forms a complex with PALS1 and MPDZ. Widely expressed.

The protein localises to the membrane. In terms of biological role, cadherins are cell-cell interaction molecules. FAT4 plays a role in the maintenance of planar cell polarity as well as in inhibition of YAP1-mediated neuroprogenitor cell proliferation and differentiation. This Mus musculus (Mouse) protein is Protocadherin Fat 4 (Fat4).